A 164-amino-acid polypeptide reads, in one-letter code: IQ domain-containing protein F2 (164 aa).

2 consecutive IQ domains span residues 43–72 (RTKA…RAWI) and 99–128 (RERA…AIYI).

This Homo sapiens (Human) protein is IQ domain-containing protein F2 (IQCF2).